Here is a 1165-residue protein sequence, read N- to C-terminus: Sperm-associated antigen 5 (1165 aa).

The disordered stretch occupies residues 1–23; it reads MWRVKTLNLGLSPSPQKGKPAMS. Phosphoserine occurs at positions 12, 14, 66, 161, 321, 333, and 342. Residues 431–457 form a disordered region; that stretch reads TVPHREARDSSTQTDSSPCGVTKTPKH. Polar residues predominate over residues 440-449; it reads SSTQTDSSPC. Positions 453 to 821 are interaction with KNSTRN; it reads KTPKHLQDSK…LRDTVDSLRA (369 aa). Positions 509–856 form a coiled coil; the sequence is RSKTLVSSCS…LLAEQLQSLT (348 aa). Residues 875–907 form a disordered region; the sequence is PSTGSAPAQEHPLSNDSSISEQTPTAAVDEVPE. Polar residues predominate over residues 876-897; the sequence is STGSAPAQEHPLSNDSSISEQT. Positions 937–1146 form a coiled coil; sequence DLEKSLAEMS…IQHVYETLLS (210 aa). Ser-946 carries the phosphoserine; by GSK3-beta modification.

As to quaternary structure, homodimer, with a globular head domain and a long stalk. Homooligomer; the globular head domains associate, resulting in aster-like structures. Binds to microtubules in the mitotic spindle. Interacts with DCLRE1B/Apollo. Part of an astrin (SPAG5)-kinastrin (SKAP) complex containing KNSTRN, SPAG5, PLK1, DYNLL1 and SGO2A. Interacts with KNSTRN. Interacts with RPTOR; this interaction competes with RPTOR binding to MTOR, resulting in decreased mTORC1 formation. Interacts with G3BP1. The complex formed with G3BP1 and RPTOR is increased by oxidative stress. Interacts with OSBPL8, PCM1 and CDK5RAP2. Interacts (via C-terminus) with NUMA1 (via C-terminus); this interaction promotes the recruitment of SPAG5 to the microtubules at spindle poles in a dynein-dynactin-dependent manner. Interacts with DYNLL1. In terms of processing, phosphorylated by AURKA. Detected in testis, but not in the other tissues tested.

The protein resides in the cytoplasm. It is found in the cytoskeleton. Its subcellular location is the spindle. It localises to the spindle pole. The protein localises to the chromosome. The protein resides in the centromere. It is found in the kinetochore. Its subcellular location is the midbody. It localises to the microtubule organizing center. The protein localises to the centrosome. The protein resides in the centriolar satellite. Functionally, essential component of the mitotic spindle required for normal chromosome segregation and progression into anaphase. Required for chromosome alignment, normal timing of sister chromatid segregation, and maintenance of spindle pole architecture. In complex with SKAP, promotes stable microtubule-kinetochore attachments. May contribute to the regulation of separase activity. May regulate AURKA localization to mitotic spindle, but not to centrosomes and CCNB1 localization to both mitotic spindle and centrosomes. Involved in centriole duplication. Required for CDK5RAP22, CEP152, WDR62 and CEP63 centrosomal localization and promotes the centrosomal localization of CDK2. In non-mitotic cells, upon stress induction, inhibits mammalian target of rapamycin complex 1 (mTORC1) association and recruits the mTORC1 component RPTOR to stress granules (SGs), thereby preventing mTORC1 hyperactivation-induced apoptosis. May enhance GSK3B-mediated phosphorylation of other substrates, such as MAPT/TAU. The polypeptide is Sperm-associated antigen 5 (Spag5) (Mus musculus (Mouse)).